We begin with the raw amino-acid sequence, 210 residues long: Large ribosomal subunit protein uL3 (210 aa).

The protein belongs to the universal ribosomal protein uL3 family. Part of the 50S ribosomal subunit. Forms a cluster with proteins L14 and L19.

Its function is as follows. One of the primary rRNA binding proteins, it binds directly near the 3'-end of the 23S rRNA, where it nucleates assembly of the 50S subunit. The chain is Large ribosomal subunit protein uL3 from Solibacter usitatus (strain Ellin6076).